Consider the following 206-residue polypeptide: Somatotropin (206 aa).

Residues 1–18 (MLDRVVVLLSVLCLGVSS) form the signal peptide. Residue glutamine 19 is modified to Pyrrolidone carboxylic acid. Zn(2+) is bound at residue histidine 37. Cysteine 70 and cysteine 179 are disulfide-bonded. Glutamate 188 is a Zn(2+) binding site. Cysteine 196 and cysteine 204 are oxidised to a cystine.

This sequence belongs to the somatotropin/prolactin family.

The protein localises to the secreted. Growth hormone plays an important role in growth control and is involved in the regulation of several anabolic processes. Implicated as an osmoregulatory substance important for seawater adaptation. This is Somatotropin (gh) from Pseudocaranx dentex (White trevally).